The following is a 257-amino-acid chain: Acetylglutamate kinase (257 aa).

Substrate contacts are provided by residues 43-44, Arg65, and Asn157; that span reads GG. ATP-binding positions include 180–185 and 208–210; these read DVSGIL and IIT.

The protein belongs to the acetylglutamate kinase family. ArgB subfamily. Homodimer.

It localises to the cytoplasm. It catalyses the reaction N-acetyl-L-glutamate + ATP = N-acetyl-L-glutamyl 5-phosphate + ADP. It participates in amino-acid biosynthesis; L-arginine biosynthesis; N(2)-acetyl-L-ornithine from L-glutamate: step 2/4. Catalyzes the ATP-dependent phosphorylation of N-acetyl-L-glutamate. The protein is Acetylglutamate kinase of Pectobacterium atrosepticum (strain SCRI 1043 / ATCC BAA-672) (Erwinia carotovora subsp. atroseptica).